We begin with the raw amino-acid sequence, 776 residues long: Mitochondrial intermediate peptidase (776 aa).

Residues 1–38 constitute a mitochondrion transit peptide; that stretch reads MLNSARTVLARHSARQLYRFRGCLVHQQRHRHQVQRTL. Residue histidine 560 coordinates Zn(2+). Residue glutamate 561 is part of the active site. 2 residues coordinate Zn(2+): histidine 564 and histidine 567.

The protein belongs to the peptidase M3 family. Zn(2+) serves as cofactor.

The protein resides in the mitochondrion matrix. It carries out the reaction Release of an N-terminal octapeptide as second stage of processing of some proteins imported into the mitochondrion.. In terms of biological role, cleaves proteins, imported into the mitochondrion, to their mature size. While most mitochondrial precursor proteins are processed to the mature form in one step by mitochondrial processing peptidase (MPP), the sequential cleavage by MIP of an octapeptide after initial processing by MPP is a required step for a subgroup of nuclear-encoded precursor proteins destined for the matrix or the inner membrane. The protein is Mitochondrial intermediate peptidase (OCT1) of Coprinopsis cinerea (strain Okayama-7 / 130 / ATCC MYA-4618 / FGSC 9003) (Inky cap fungus).